Reading from the N-terminus, the 451-residue chain is Proline--tRNA ligase (451 aa).

Belongs to the class-II aminoacyl-tRNA synthetase family. ProS type 2 subfamily. Homodimer.

Its subcellular location is the cytoplasm. It catalyses the reaction tRNA(Pro) + L-proline + ATP = L-prolyl-tRNA(Pro) + AMP + diphosphate. Catalyzes the attachment of proline to tRNA(Pro) in a two-step reaction: proline is first activated by ATP to form Pro-AMP and then transferred to the acceptor end of tRNA(Pro). In Ruegeria sp. (strain TM1040) (Silicibacter sp.), this protein is Proline--tRNA ligase.